The following is a 65-amino-acid chain: Large ribosomal subunit protein bL32 (65 aa).

It belongs to the bacterial ribosomal protein bL32 family.

The chain is Large ribosomal subunit protein bL32 from Tropheryma whipplei (strain TW08/27) (Whipple's bacillus).